A 209-amino-acid chain; its full sequence is Putative 3-methyladenine DNA glycosylase (209 aa).

Belongs to the DNA glycosylase MPG family.

The sequence is that of Putative 3-methyladenine DNA glycosylase from Deinococcus geothermalis (strain DSM 11300 / CIP 105573 / AG-3a).